The chain runs to 870 residues: Protein translocase subunit SecA (870 aa).

ATP contacts are provided by residues Q86, 104-108 (GEGKT), and D499. Zn(2+) is bound by residues C854, C856, C865, and H866.

This sequence belongs to the SecA family. As to quaternary structure, monomer and homodimer. Part of the essential Sec protein translocation apparatus which comprises SecA, SecYEG and auxiliary proteins SecDF-YajC and YidC. Zn(2+) serves as cofactor.

The protein resides in the cell inner membrane. It is found in the cytoplasm. It catalyses the reaction ATP + H2O + cellular proteinSide 1 = ADP + phosphate + cellular proteinSide 2.. Functionally, part of the Sec protein translocase complex. Interacts with the SecYEG preprotein conducting channel. Has a central role in coupling the hydrolysis of ATP to the transfer of proteins into and across the cell membrane, serving both as a receptor for the preprotein-SecB complex and as an ATP-driven molecular motor driving the stepwise translocation of polypeptide chains across the membrane. The protein is Protein translocase subunit SecA of Ehrlichia ruminantium (strain Welgevonden).